The chain runs to 152 residues: MKCAFCGNPDTQVIDSRVSEDGSSIRRRRRCPACDKRFTTFETADVRMPQVVKTAGHRSEFDIEKVRTSFLRALHKRPVSTTLVDEAIDRICHKLLQLGEREVSSRQIGEMVMNELARLDKVAYVRFASVYRSFQDISEFTDAIKEIQKSSH.

Residues 3 to 34 fold into a zinc finger; that stretch reads CAFCGNPDTQVIDSRVSEDGSSIRRRRRCPAC. The ATP-cone domain maps to 49 to 139; the sequence is PQVVKTAGHR…VYRSFQDISE (91 aa).

The protein belongs to the NrdR family. The cofactor is Zn(2+).

Functionally, negatively regulates transcription of bacterial ribonucleotide reductase nrd genes and operons by binding to NrdR-boxes. This Chromobacterium violaceum (strain ATCC 12472 / DSM 30191 / JCM 1249 / CCUG 213 / NBRC 12614 / NCIMB 9131 / NCTC 9757 / MK) protein is Transcriptional repressor NrdR.